Consider the following 570-residue polypeptide: Proline--tRNA ligase (570 aa).

It belongs to the class-II aminoacyl-tRNA synthetase family. ProS type 1 subfamily. In terms of assembly, homodimer.

Its subcellular location is the cytoplasm. It carries out the reaction tRNA(Pro) + L-proline + ATP = L-prolyl-tRNA(Pro) + AMP + diphosphate. In terms of biological role, catalyzes the attachment of proline to tRNA(Pro) in a two-step reaction: proline is first activated by ATP to form Pro-AMP and then transferred to the acceptor end of tRNA(Pro). As ProRS can inadvertently accommodate and process non-cognate amino acids such as alanine and cysteine, to avoid such errors it has two additional distinct editing activities against alanine. One activity is designated as 'pretransfer' editing and involves the tRNA(Pro)-independent hydrolysis of activated Ala-AMP. The other activity is designated 'posttransfer' editing and involves deacylation of mischarged Ala-tRNA(Pro). The misacylated Cys-tRNA(Pro) is not edited by ProRS. This Clostridium botulinum (strain Eklund 17B / Type B) protein is Proline--tRNA ligase.